Reading from the N-terminus, the 539-residue chain is T-complex protein 1 subunit delta (539 aa).

Residues 1–29 (MPENVAPRSGATAGAAGGRGKGAYQDRDK) are disordered. At Arg-19 the chain carries Omega-N-methylarginine. Lys-21 is subject to N6-acetyllysine. Ser-36 is modified (phosphoserine). Gly-53 serves as a coordination point for ADP. Residue Gly-53 coordinates ATP. Residue Asp-104 coordinates Mg(2+). ADP is bound by residues Gly-105, Thr-106, Thr-107, Ser-108, Asn-172, Ser-173, and Lys-174. ATP-binding residues include Gly-105 and Thr-106. Lys-174 is an ATP binding site. Ser-184 and Ser-202 each carry phosphoserine. Lys-288, Lys-302, Lys-319, and Lys-326 each carry N6-acetyllysine. Residue Gly-425 participates in ADP binding. Ser-444 carries the post-translational modification Phosphoserine. Gln-510 provides a ligand contact to ADP.

The protein belongs to the TCP-1 chaperonin family. Component of the chaperonin-containing T-complex (TRiC), a hexadecamer composed of two identical back-to-back stacked rings enclosing a protein folding chamber. Each ring is made up of eight different subunits: TCP1/CCT1, CCT2, CCT3, CCT4, CCT5, CCT6A/CCT6, CCT7, CCT8. Interacts with PACRG. Interacts with DNAAF4. Interacts with DLEC1.

It localises to the cytoplasm. The protein localises to the melanosome. It is found in the cytoskeleton. The protein resides in the microtubule organizing center. Its subcellular location is the centrosome. It localises to the cilium basal body. The enzyme catalyses ATP + H2O = ADP + phosphate + H(+). Its function is as follows. Component of the chaperonin-containing T-complex (TRiC), a molecular chaperone complex that assists the folding of actin, tubulin and other proteins upon ATP hydrolysis. The TRiC complex mediates the folding of WRAP53/TCAB1, thereby regulating telomere maintenance. As part of the TRiC complex may play a role in the assembly of BBSome, a complex involved in ciliogenesis regulating transports vesicles to the cilia. The sequence is that of T-complex protein 1 subunit delta (CCT4) from Homo sapiens (Human).